Here is a 416-residue protein sequence, read N- to C-terminus: 2,3-bisphosphoglycerate-independent phosphoglycerate mutase (416 aa).

The protein belongs to the BPG-independent phosphoglycerate mutase family. A-PGAM subfamily.

The catalysed reaction is (2R)-2-phosphoglycerate = (2R)-3-phosphoglycerate. Its pathway is carbohydrate degradation; glycolysis; pyruvate from D-glyceraldehyde 3-phosphate: step 3/5. Catalyzes the interconversion of 2-phosphoglycerate and 3-phosphoglycerate. The sequence is that of 2,3-bisphosphoglycerate-independent phosphoglycerate mutase from Ignicoccus hospitalis (strain KIN4/I / DSM 18386 / JCM 14125).